The primary structure comprises 118 residues: ATP-dependent Clp protease adapter protein ClpS (118 aa).

A disordered region spans residues 1–24; it reads MNGSSNSGSPGGGQTGDDDGTGFD.

It belongs to the ClpS family. As to quaternary structure, binds to the N-terminal domain of the chaperone ClpA.

Functionally, involved in the modulation of the specificity of the ClpAP-mediated ATP-dependent protein degradation. This chain is ATP-dependent Clp protease adapter protein ClpS, found in Hyphomonas neptunium (strain ATCC 15444).